The primary structure comprises 425 residues: UPF0761 membrane protein PXO_04555 (425 aa).

Transmembrane regions (helical) follow at residues 48–68 (VFALVPLAIVVFGVLSAFPAF), 105–125 (FTVAGMVALVASLLITLHSIE), 154–174 (GTMLAAASMAMAAYVFALPLF), 182–202 (LAEFAWRLAPMAVEFICIVLI), 219–239 (GALLAVILMEIVKWGFGVYLG), and 250–270 (ALSALPILLLWIYLSWVSVLL).

It belongs to the UPF0761 family.

Its subcellular location is the cell inner membrane. This chain is UPF0761 membrane protein PXO_04555, found in Xanthomonas oryzae pv. oryzae (strain PXO99A).